A 344-amino-acid chain; its full sequence is AA9 family lytic polysaccharide monooxygenase D (344 aa).

A signal peptide spans Met1 to Ala23. His24 provides a ligand contact to Cu(2+). The cysteines at positions 70 and 193 are disulfide-linked. His179 contributes to the O2 binding site. Position 190 (Tyr190) interacts with Cu(2+). N-linked (GlcNAc...) asparagine glycans are attached at residues Asn201 and Asn207. The tract at residues Pro240–Asn321 is disordered. Positions Ser259 to Thr292 are enriched in low complexity. Positions Ala311 to Ala320 are enriched in polar residues. Residue Asn317 is glycosylated (N-linked (GlcNAc...) asparagine).

Belongs to the polysaccharide monooxygenase AA9 family. Cu(2+) is required as a cofactor.

The protein localises to the secreted. The enzyme catalyses [(1-&gt;4)-beta-D-glucosyl]n+m + reduced acceptor + O2 = 4-dehydro-beta-D-glucosyl-[(1-&gt;4)-beta-D-glucosyl]n-1 + [(1-&gt;4)-beta-D-glucosyl]m + acceptor + H2O.. Lytic polysaccharide monooxygenase (LPMO) that depolymerizes crystalline and amorphous polysaccharides via the oxidation of scissile alpha- or beta-(1-4)-glycosidic bonds, yielding C1 or C4 oxidation products. Catalysis by LPMOs requires the reduction of the active-site copper from Cu(II) to Cu(I) by a reducing agent and H(2)O(2) or O(2) as a cosubstrate. This Gloeophyllum trabeum (strain ATCC 11539 / FP-39264 / Madison 617) (Brown rot fungus) protein is AA9 family lytic polysaccharide monooxygenase D.